Here is a 395-residue protein sequence, read N- to C-terminus: [LysW]-aminoadipate semialdehyde transaminase (395 aa).

Pyridoxal 5'-phosphate-binding positions include Gly-113–Thr-114 and Phe-140. Arg-143 is a substrate binding site. Residue Asp-225–Gln-228 participates in pyridoxal 5'-phosphate binding. At Lys-254 the chain carries N6-(pyridoxal phosphate)lysine. Thr-282 lines the substrate pocket. Thr-283 serves as a coordination point for pyridoxal 5'-phosphate.

The protein belongs to the class-III pyridoxal-phosphate-dependent aminotransferase family. LysJ subfamily. Homodimer. Pyridoxal 5'-phosphate is required as a cofactor.

The protein resides in the cytoplasm. The catalysed reaction is [amino-group carrier protein]-C-terminal-gamma-(L-lysyl)-L-glutamate + 2-oxoglutarate = [amino-group carrier protein]-C-terminal-N-(1-carboxy-5-oxopentan-1-yl)-L-glutamine + L-glutamate. Its pathway is amino-acid biosynthesis; L-lysine biosynthesis via AAA pathway; L-lysine from L-alpha-aminoadipate (Thermus route): step 4/5. In terms of biological role, catalyzes the transfer of the amino group of L-glutamate to [LysW]-aminoadipate 6-semialdehyde, generating [LysW]-gamma-L-lysine. The protein is [LysW]-aminoadipate semialdehyde transaminase of Thermus thermophilus (strain ATCC 27634 / DSM 579 / HB8).